Consider the following 559-residue polypeptide: MDSTEDRETPLKDQIRRLTNENVQLQDRNERLYAKLGELQDKMGKLAGSKTDLSSKLVLSEEEKLKISKELIELQIETNKIREHYEAETFELKNTILTLENRLMSLELQKEKLAGEHESVKERLQAVDANRKELADEYIVLKSNYLALSKEHEKEVAKNDELSMELLNLASRRGQDETYSQSRALVNEATAELDRVKAMVNRLSARNIKPEDLVATEYERQKLERNLLGNQDHIREEIENMKKIHETQQQRLEERIIAMGKELQEAKRAIRNTQHKMAEQSAVLLTSQSQLQETEAQNSHLQLQLKELNEEYRSRLNRYIQDLADYVDGTARSKGDGTRMKHFVDNMLSDIKASHRSREEQLAGAARQYKKRMQNLIKKHQSLLIAYRMQREQLLASGNQDVEPGPPEHHFTITDPELQSQVGLELNRLREDKARLETQIHDLKEKKRLSDAGTSNQHVEHGGKLQEESWAEIRKQLREFTHNTQEELERERSQLLSRALVAEEQVAELQDYVDKHLARYKQEILRLRKLLGNEEQRAVSADAPQSLLIRALRRNSHEM.

The span at methionine 1–threonine 19 shows a compositional bias: basic and acidic residues. Residues methionine 1–asparagine 20 are disordered. Coiled coils occupy residues threonine 9 to valine 327 and glutamine 419 to alanine 541.

The protein belongs to the CCDC78 family. As to expression, restricted to multiciliated cells.

It localises to the cytoplasm. Its subcellular location is the cytoskeleton. The protein localises to the microtubule organizing center. The protein resides in the centrosome. It is found in the centriole. In terms of biological role, component of the deuterosome, a structure that promotes de novo centriole amplification in multiciliated cells that can generate more than 100 centrioles. Deuterosome-mediated centriole amplification occurs in terminally differentiated multiciliated cells (G1/0) and not in S phase. Essential for centriole amplification and is required for cep152 localization to the deuterosome. The polypeptide is Coiled-coil domain-containing protein 78 (ccdc78) (Xenopus laevis (African clawed frog)).